We begin with the raw amino-acid sequence, 205 residues long: Thiamine-phosphate synthase (205 aa).

Residues 34–38 (QLRCK) and N66 contribute to the 4-amino-2-methyl-5-(diphosphooxymethyl)pyrimidine site. Residues D67 and D86 each coordinate Mg(2+). S105 is a binding site for 4-amino-2-methyl-5-(diphosphooxymethyl)pyrimidine. Residue 131-133 (TTT) participates in 2-[(2R,5Z)-2-carboxy-4-methylthiazol-5(2H)-ylidene]ethyl phosphate binding. A 4-amino-2-methyl-5-(diphosphooxymethyl)pyrimidine-binding site is contributed by K134. G163 contacts 2-[(2R,5Z)-2-carboxy-4-methylthiazol-5(2H)-ylidene]ethyl phosphate.

Belongs to the thiamine-phosphate synthase family. The cofactor is Mg(2+).

It carries out the reaction 2-[(2R,5Z)-2-carboxy-4-methylthiazol-5(2H)-ylidene]ethyl phosphate + 4-amino-2-methyl-5-(diphosphooxymethyl)pyrimidine + 2 H(+) = thiamine phosphate + CO2 + diphosphate. The enzyme catalyses 2-(2-carboxy-4-methylthiazol-5-yl)ethyl phosphate + 4-amino-2-methyl-5-(diphosphooxymethyl)pyrimidine + 2 H(+) = thiamine phosphate + CO2 + diphosphate. It catalyses the reaction 4-methyl-5-(2-phosphooxyethyl)-thiazole + 4-amino-2-methyl-5-(diphosphooxymethyl)pyrimidine + H(+) = thiamine phosphate + diphosphate. It participates in cofactor biosynthesis; thiamine diphosphate biosynthesis; thiamine phosphate from 4-amino-2-methyl-5-diphosphomethylpyrimidine and 4-methyl-5-(2-phosphoethyl)-thiazole: step 1/1. Functionally, condenses 4-methyl-5-(beta-hydroxyethyl)thiazole monophosphate (THZ-P) and 2-methyl-4-amino-5-hydroxymethyl pyrimidine pyrophosphate (HMP-PP) to form thiamine monophosphate (TMP). The chain is Thiamine-phosphate synthase from Neisseria meningitidis serogroup A / serotype 4A (strain DSM 15465 / Z2491).